Here is a 635-residue protein sequence, read N- to C-terminus: Probable potassium transport system protein Kup (635 aa).

12 helical membrane-spanning segments follow: residues L22–L42, V59–V79, M111–I131, A148–L168, A180–M200, V216–A236, W259–L279, A297–I317, I349–F369, A378–A398, V404–F424, and I428–L448.

The protein belongs to the HAK/KUP transporter (TC 2.A.72) family.

The protein resides in the cell inner membrane. The catalysed reaction is K(+)(in) + H(+)(in) = K(+)(out) + H(+)(out). Its function is as follows. Transport of potassium into the cell. Likely operates as a K(+):H(+) symporter. This chain is Probable potassium transport system protein Kup, found in Xanthomonas oryzae pv. oryzae (strain KACC10331 / KXO85).